The sequence spans 74 residues: Translation initiation factor IF-1 (74 aa).

An S1-like domain is found at 1–73 (MSNKEDIIKM…TKGRIVYRKK (73 aa)).

The protein belongs to the IF-1 family. In terms of assembly, component of the 30S ribosomal translation pre-initiation complex which assembles on the 30S ribosome in the order IF-2 and IF-3, IF-1 and N-formylmethionyl-tRNA(fMet); mRNA recruitment can occur at any time during PIC assembly.

Its subcellular location is the cytoplasm. Its function is as follows. One of the essential components for the initiation of protein synthesis. Stabilizes the binding of IF-2 and IF-3 on the 30S subunit to which N-formylmethionyl-tRNA(fMet) subsequently binds. Helps modulate mRNA selection, yielding the 30S pre-initiation complex (PIC). Upon addition of the 50S ribosomal subunit IF-1, IF-2 and IF-3 are released leaving the mature 70S translation initiation complex. The chain is Translation initiation factor IF-1 from Thermosipho melanesiensis (strain DSM 12029 / CIP 104789 / BI429).